A 238-amino-acid polypeptide reads, in one-letter code: Probable transcriptional regulatory protein SPD_1725 (238 aa).

This sequence belongs to the TACO1 family. YeeN subfamily.

It localises to the cytoplasm. The chain is Probable transcriptional regulatory protein SPD_1725 from Streptococcus pneumoniae serotype 2 (strain D39 / NCTC 7466).